The chain runs to 204 residues: Holliday junction branch migration complex subunit RuvA (204 aa).

A domain I region spans residues methionine 1–methionine 64. The tract at residues threonine 65–glycine 143 is domain II. The tract at residues leucine 144–glycine 151 is flexible linker. The segment at valine 152–arginine 204 is domain III.

This sequence belongs to the RuvA family. In terms of assembly, homotetramer. Forms an RuvA(8)-RuvB(12)-Holliday junction (HJ) complex. HJ DNA is sandwiched between 2 RuvA tetramers; dsDNA enters through RuvA and exits via RuvB. An RuvB hexamer assembles on each DNA strand where it exits the tetramer. Each RuvB hexamer is contacted by two RuvA subunits (via domain III) on 2 adjacent RuvB subunits; this complex drives branch migration. In the full resolvosome a probable DNA-RuvA(4)-RuvB(12)-RuvC(2) complex forms which resolves the HJ.

It localises to the cytoplasm. Its function is as follows. The RuvA-RuvB-RuvC complex processes Holliday junction (HJ) DNA during genetic recombination and DNA repair, while the RuvA-RuvB complex plays an important role in the rescue of blocked DNA replication forks via replication fork reversal (RFR). RuvA specifically binds to HJ cruciform DNA, conferring on it an open structure. The RuvB hexamer acts as an ATP-dependent pump, pulling dsDNA into and through the RuvAB complex. HJ branch migration allows RuvC to scan DNA until it finds its consensus sequence, where it cleaves and resolves the cruciform DNA. This is Holliday junction branch migration complex subunit RuvA from Rhizobium johnstonii (strain DSM 114642 / LMG 32736 / 3841) (Rhizobium leguminosarum bv. viciae).